The chain runs to 95 residues: Translation initiation factor 1A (95 aa).

In terms of domain architecture, S1-like spans 6–80 (SRKNLRMPEE…EKADITWRYE (75 aa)).

It belongs to the eIF-1A family.

In terms of biological role, seems to be required for maximal rate of protein biosynthesis. Enhances ribosome dissociation into subunits and stabilizes the binding of the initiator Met-tRNA(I) to 40 S ribosomal subunits. This Haloarcula marismortui (strain ATCC 43049 / DSM 3752 / JCM 8966 / VKM B-1809) (Halobacterium marismortui) protein is Translation initiation factor 1A.